A 460-amino-acid chain; its full sequence is 3-isopropylmalate dehydratase large subunit (460 aa).

[4Fe-4S] cluster contacts are provided by Cys-341, Cys-401, and Cys-404.

This sequence belongs to the aconitase/IPM isomerase family. LeuC type 1 subfamily. As to quaternary structure, heterodimer of LeuC and LeuD. Requires [4Fe-4S] cluster as cofactor.

It carries out the reaction (2R,3S)-3-isopropylmalate = (2S)-2-isopropylmalate. It functions in the pathway amino-acid biosynthesis; L-leucine biosynthesis; L-leucine from 3-methyl-2-oxobutanoate: step 2/4. Functionally, catalyzes the isomerization between 2-isopropylmalate and 3-isopropylmalate, via the formation of 2-isopropylmaleate. The chain is 3-isopropylmalate dehydratase large subunit from Phocaeicola vulgatus (strain ATCC 8482 / DSM 1447 / JCM 5826 / CCUG 4940 / NBRC 14291 / NCTC 11154) (Bacteroides vulgatus).